A 597-amino-acid chain; its full sequence is U3 small nucleolar RNA-associated protein 6 homolog (597 aa).

HAT repeat units follow at residues Ala-121–Glu-153, Leu-156–Met-188, Arg-304–Glu-335, Gly-488–Glu-520, and Cys-524–Asn-557.

It belongs to the UTP6 family. In terms of assembly, part of the small subunit (SSU) processome, composed of more than 70 proteins and the RNA chaperone small nucleolar RNA (snoRNA) U3.

It is found in the nucleus. The protein resides in the nucleolus. Its function is as follows. Part of the small subunit (SSU) processome, first precursor of the small eukaryotic ribosomal subunit. During the assembly of the SSU processome in the nucleolus, many ribosome biogenesis factors, an RNA chaperone and ribosomal proteins associate with the nascent pre-rRNA and work in concert to generate RNA folding, modifications, rearrangements and cleavage as well as targeted degradation of pre-ribosomal RNA by the RNA exosome. Involved in nucleolar processing of pre-18S ribosomal RNA. This chain is U3 small nucleolar RNA-associated protein 6 homolog, found in Homo sapiens (Human).